The chain runs to 557 residues: Glucose-6-phosphate isomerase (557 aa).

Residue glutamate 359 is the Proton donor of the active site. Residues histidine 390 and lysine 518 contribute to the active site.

Belongs to the GPI family.

It is found in the cytoplasm. It carries out the reaction alpha-D-glucose 6-phosphate = beta-D-fructose 6-phosphate. It participates in carbohydrate biosynthesis; gluconeogenesis. The protein operates within carbohydrate degradation; glycolysis; D-glyceraldehyde 3-phosphate and glycerone phosphate from D-glucose: step 2/4. In terms of biological role, catalyzes the reversible isomerization of glucose-6-phosphate to fructose-6-phosphate. The sequence is that of Glucose-6-phosphate isomerase from Hahella chejuensis (strain KCTC 2396).